Consider the following 346-residue polypeptide: Serpentine receptor class gamma-20 (346 aa).

7 consecutive transmembrane segments (helical) span residues 27 to 47 (VMLSILEYLVQATYLSVSAVL), 69 to 89 (FFVLYAAEAVMNVYSCVIEVL), 106 to 128 (PFFFTPSILTKLYFLLNHYCLAF), 157 to 177 (ILAPVLVSLFVLPLGVTWNIL), 212 to 232 (IPCLFLMIVFFLASIFGLTML), 254 to 274 (TMLFAIAQIYFAFLAGYLPGI), and 279 to 299 (LLISFNVFDVLYVYSPIALIL).

The protein belongs to the nematode receptor-like protein srg family.

It localises to the membrane. The polypeptide is Serpentine receptor class gamma-20 (srg-20) (Caenorhabditis elegans).